The chain runs to 122 residues: Fluoride-specific ion channel FluC (122 aa).

4 helical membrane-spanning segments follow: residues 5–25 (FLIG…SGII), 29–49 (FGIP…VGFL), 65–85 (FIIT…YESF), and 93–113 (FIKS…MIYF). Residues G72 and T75 each coordinate Na(+).

The protein belongs to the fluoride channel Fluc/FEX (TC 1.A.43) family.

The protein localises to the cell membrane. The enzyme catalyses fluoride(in) = fluoride(out). Its activity is regulated as follows. Na(+) is not transported, but it plays an essential structural role and its presence is essential for fluoride channel function. Its function is as follows. Fluoride-specific ion channel. Important for reducing fluoride concentration in the cell, thus reducing its toxicity. This Methanococcus vannielii (strain ATCC 35089 / DSM 1224 / JCM 13029 / OCM 148 / SB) protein is Fluoride-specific ion channel FluC.